We begin with the raw amino-acid sequence, 156 residues long: Small ribosomal subunit protein uS7 (156 aa).

The protein belongs to the universal ribosomal protein uS7 family. In terms of assembly, part of the 30S ribosomal subunit. Contacts proteins S9 and S11.

Its function is as follows. One of the primary rRNA binding proteins, it binds directly to 16S rRNA where it nucleates assembly of the head domain of the 30S subunit. Is located at the subunit interface close to the decoding center, probably blocks exit of the E-site tRNA. This chain is Small ribosomal subunit protein uS7, found in Rippkaea orientalis (strain PCC 8801 / RF-1) (Cyanothece sp. (strain PCC 8801)).